We begin with the raw amino-acid sequence, 158 residues long: Cyclic pyranopterin monophosphate synthase (158 aa).

Residues 75–77 (LCH) and 113–114 (ME) contribute to the substrate site. The active site involves D128.

Belongs to the MoaC family. In terms of assembly, homohexamer; trimer of dimers.

It carries out the reaction (8S)-3',8-cyclo-7,8-dihydroguanosine 5'-triphosphate = cyclic pyranopterin phosphate + diphosphate. The protein operates within cofactor biosynthesis; molybdopterin biosynthesis. Functionally, catalyzes the conversion of (8S)-3',8-cyclo-7,8-dihydroguanosine 5'-triphosphate to cyclic pyranopterin monophosphate (cPMP). This is Cyclic pyranopterin monophosphate synthase from Azorhizobium caulinodans (strain ATCC 43989 / DSM 5975 / JCM 20966 / LMG 6465 / NBRC 14845 / NCIMB 13405 / ORS 571).